The following is a 451-amino-acid chain: Protein-tyrosine kinase 6 (451 aa).

An SH3 domain is found at 8–72; that stretch reads HLGPKYVGLW…PHNYLAERET (65 aa). A phosphotyrosine; by autocatalysis mark is found at tyrosine 13, tyrosine 61, tyrosine 66, and tyrosine 114. Residues 78-170 enclose the SH2 domain; it reads WFFGCISRSE…SHGLRLAAPC (93 aa). Positions 171–190 are linker; the sequence is RKHEPEPLPHWDDWERPREE. In terms of domain architecture, Protein kinase spans 191–445; the sequence is FTLCRKLGSG…ALRERLSSFT (255 aa). Residues 197 to 205 and lysine 219 each bind ATP; that span reads LGSGYFGEV. The active-site Proton acceptor is the aspartate 312. Phosphotyrosine; by autocatalysis is present on residues tyrosine 342 and tyrosine 351. A Phosphotyrosine modification is found at tyrosine 447.

The protein belongs to the protein kinase superfamily. Tyr protein kinase family. BRK/PTK6/SIK subfamily. As to quaternary structure, interacts with GAP-A.p65. Interacts (via SH3 and SH2 domains) with KHDRBS1. Interacts (via SH3 and SH2 domains) with phosphorylated IRS4. Interacts with ADAM15. Interacts (via SH3 domain) with SFPQ. Interacts with EGFR and ERBB2. Interacts with STAP2. Interacts with PNX. Interacts with SFPQ. Interacts with PTK/ATK. Interacts with CTNNB1. In terms of processing, autophosphorylated. Autophosphorylation of Tyr-342 leads to an increase of kinase activity. Tyr-447 binds to the SH2 domain when phosphorylated and negatively regulates kinase activity. In terms of tissue distribution, epithelia-specific. Very high level in colon and high levels in small intestine and prostate, and low levels in some fetal tissues. Not expressed in breast or ovarian tissue but expressed in high percentage of breast and ovarian cancers. Also overexpressed in some metastatic melanomas, lymphomas, colon cancers, squamous cell carcinomas and prostate cancers. Also found in melanocytes. Not expressed in heart, brain, placenta, lung, liver, skeletal muscle, kidney and pancreas. Isoform 2 is present in prostate epithelial cell lines derived from normal prostate and prostate adenocarcinomas, as well as in a variety of cell lines.

It is found in the cytoplasm. It localises to the nucleus. The protein resides in the cell projection. The protein localises to the ruffle. Its subcellular location is the membrane. It carries out the reaction L-tyrosyl-[protein] + ATP = O-phospho-L-tyrosyl-[protein] + ADP + H(+). With respect to regulation, activated by EGF, NRG1 and IGF1. Inhibited by SOCS3 to phosphorylate STAT3. Stabilized in the inactive form by an association between the SH3 domain and the SH2-TK linker region. Interaction between Trp-184 within SH2-TK linker region and the catalytic domain appears essential for positive regulation of kinase activity. Non-receptor tyrosine-protein kinase implicated in the regulation of a variety of signaling pathways that control the differentiation and maintenance of normal epithelia, as well as tumor growth. Function seems to be context dependent and differ depending on cell type, as well as its intracellular localization. A number of potential nuclear and cytoplasmic substrates have been identified. These include the RNA-binding proteins: KHDRBS1/SAM68, KHDRBS2/SLM1, KHDRBS3/SLM2 and SFPQ/PSF; transcription factors: STAT3 and STAT5A/B and a variety of signaling molecules: ARHGAP35/p190RhoGAP, PXN/paxillin, BTK/ATK, STAP2/BKS. Phosphorylates the GTPase-activating protein ARAP1 following EGF stimulation which enhances EGFR signaling by delaying EGFR down-regulation. Also associates with a variety of proteins that are likely upstream of PTK6 in various signaling pathways, or for which PTK6 may play an adapter-like role. These proteins include ADAM15, EGFR, ERBB2, ERBB3 and IRS4. In normal or non-tumorigenic tissues, PTK6 promotes cellular differentiation and apoptosis. In tumors PTK6 contributes to cancer progression by sensitizing cells to mitogenic signals and enhancing proliferation, anchorage-independent survival and migration/invasion. Association with EGFR, ERBB2, ERBB3 may contribute to mammary tumor development and growth through enhancement of EGF-induced signaling via BTK/AKT and PI3 kinase. Contributes to migration and proliferation by contributing to EGF-mediated phosphorylation of ARHGAP35/p190RhoGAP, which promotes association with RASA1/p120RasGAP, inactivating RhoA while activating RAS. EGF stimulation resulted in phosphorylation of PNX/Paxillin by PTK6 and activation of RAC1 via CRK/CrKII, thereby promoting migration and invasion. PTK6 activates STAT3 and STAT5B to promote proliferation. Nuclear PTK6 may be important for regulating growth in normal epithelia, while cytoplasmic PTK6 might activate oncogenic signaling pathways. In terms of biological role, inhibits PTK6 phosphorylation and PTK6 association with other tyrosine-phosphorylated proteins. This is Protein-tyrosine kinase 6 (PTK6) from Homo sapiens (Human).